The sequence spans 132 residues: Myelin P2 protein (132 aa).

S2 carries the post-translational modification N-acetylserine. R107 provides a ligand contact to (9Z)-octadecenoate. Residue R107 coordinates hexadecanoate. Cysteines 118 and 125 form a disulfide. Residue 127 to 129 (RIY) coordinates (9Z)-octadecenoate. 127–129 (RIY) is a binding site for hexadecanoate.

This sequence belongs to the calycin superfamily. Fatty-acid binding protein (FABP) family. Monomer. In terms of tissue distribution, detected in spinal cord (at protein level).

Its subcellular location is the cytoplasm. Its function is as follows. May play a role in lipid transport protein in Schwann cells. May bind cholesterol. This chain is Myelin P2 protein (PMP2), found in Equus caballus (Horse).